Reading from the N-terminus, the 80-residue chain is Large ribosomal subunit protein bL28 (80 aa).

The tract at residues 1 to 21 is disordered; sequence MSRICQITRKKSMKGNSVAHS.

This sequence belongs to the bacterial ribosomal protein bL28 family.

This is Large ribosomal subunit protein bL28 from Azobacteroides pseudotrichonymphae genomovar. CFP2.